Consider the following 398-residue polypeptide: O-methyltransferase mpaG (398 aa).

D264 is an S-adenosyl-L-methionine binding site. The active-site Proton acceptor is the H306. Active-site residues include E335 and E362.

Belongs to the class I-like SAM-binding methyltransferase superfamily. Cation-independent O-methyltransferase family. COMT subfamily.

It is found in the cytoplasm. Its subcellular location is the cytosol. The enzyme catalyses (4E,8E)-10-(4,6-dihydroxy-7-methyl-3-oxo-1,3-dihydro-2-benzofuran-5-yl)-4,8-dimethyldeca-4,8-dienoate + S-adenosyl-L-methionine = (4E,8E)-10-(4-hydroxy-6-methoxy-7-methyl-3-oxo-1,3-dihydro-2-benzofuran-5-yl)-4,8-dimethyldeca-4,8-dienoate + S-adenosyl-L-homocysteine + H(+). Its pathway is secondary metabolite biosynthesis; terpenoid biosynthesis. In terms of biological role, O-methyltransferase; part of the gene cluster that mediates the biosynthesis of mycophenolic acid (MPA), the first isolated antibiotic natural product in the world obtained from a culture of Penicillium brevicompactum in 1893. MpaC methylates farnesyl-DHMP-3C (FDHMP-3C) to yield MFDHMP-3C. The first step of the pathway is the synthesis of 5-methylorsellinic acid (5MOA) by the cytosolic polyketide synthase mpaC. 5MOA is then converted to the phthalide compound 5,7-dihydroxy-4,6-dimethylphthalide (DHMP) by the endoplasmic reticulum-bound cytochrome P450 monooxygenase mpaDE. MpaDE first catalyzes hydroxylation of 5-MOA to 4,6-dihydroxy-2-(hydroxymethyl)-3-methylbenzoic acid (DHMB). MpaDE then acts as a lactone synthase that catalyzes the ring closure to convert DHMB into DHMP. The next step is the prenylation of DHMP by the Golgi apparatus-associated prenyltransferase mpaA to yield farnesyl-DHMP (FDHMP). The ER-bound oxygenase mpaB then mediates the oxidative cleavage the C19-C20 double bond in FDHMP to yield FDHMP-3C via a mycophenolic aldehyde intermediate. The O-methyltransferase mpaG catalyzes the methylation of FDHMP-3C to yield MFDHMP-3C. After the cytosolic methylation of FDHMP-3C, MFDHMP-3C enters into peroxisomes probably via free diffusion due to its low molecular weight. Upon a peroxisomal CoA ligation reaction, catalyzed by a beta-oxidation component enzyme acyl-CoA ligase ACL891, MFDHMP-3C-CoA would then be restricted to peroxisomes for the following beta-oxidation pathway steps. The peroxisomal beta-oxidation machinery than converts MFDHMP-3C-CoA into MPA_CoA, via a beta-oxidation chain-shortening process. Finally mpaH acts as a peroxisomal acyl-CoA hydrolase with high substrate specificity toward MPA-CoA to release the final product MPA. In Penicillium roqueforti (strain FM164), this protein is O-methyltransferase mpaG.